We begin with the raw amino-acid sequence, 296 residues long: NAD kinase (296 aa).

Catalysis depends on D73, which acts as the Proton acceptor. Residues 73 to 74, K78, 151 to 152, R178, D180, and 191 to 196 contribute to the NAD(+) site; these read DG, NE, and TAHAMS.

This sequence belongs to the NAD kinase family. A divalent metal cation is required as a cofactor.

The protein localises to the cytoplasm. It carries out the reaction NAD(+) + ATP = ADP + NADP(+) + H(+). Functionally, involved in the regulation of the intracellular balance of NAD and NADP, and is a key enzyme in the biosynthesis of NADP. Catalyzes specifically the phosphorylation on 2'-hydroxyl of the adenosine moiety of NAD to yield NADP. This Francisella tularensis subsp. novicida (strain U112) protein is NAD kinase.